The chain runs to 132 residues: Phosphoribosyl-AMP cyclohydrolase (132 aa).

Aspartate 78 provides a ligand contact to Mg(2+). Position 79 (cysteine 79) interacts with Zn(2+). Aspartate 80 and aspartate 82 together coordinate Mg(2+). Positions 96 and 103 each coordinate Zn(2+).

The protein belongs to the PRA-CH family. Homodimer. The cofactor is Mg(2+). It depends on Zn(2+) as a cofactor.

The protein resides in the cytoplasm. It carries out the reaction 1-(5-phospho-beta-D-ribosyl)-5'-AMP + H2O = 1-(5-phospho-beta-D-ribosyl)-5-[(5-phospho-beta-D-ribosylamino)methylideneamino]imidazole-4-carboxamide. Its pathway is amino-acid biosynthesis; L-histidine biosynthesis; L-histidine from 5-phospho-alpha-D-ribose 1-diphosphate: step 3/9. Its function is as follows. Catalyzes the hydrolysis of the adenine ring of phosphoribosyl-AMP. This Nitrosococcus oceani (strain ATCC 19707 / BCRC 17464 / JCM 30415 / NCIMB 11848 / C-107) protein is Phosphoribosyl-AMP cyclohydrolase.